Consider the following 553-residue polypeptide: Arginine--tRNA ligase (553 aa).

Residues 122–132 carry the 'HIGH' region motif; that stretch reads ANPTGFLHVGH.

It belongs to the class-I aminoacyl-tRNA synthetase family. In terms of assembly, monomer.

The protein localises to the cytoplasm. The enzyme catalyses tRNA(Arg) + L-arginine + ATP = L-arginyl-tRNA(Arg) + AMP + diphosphate. The sequence is that of Arginine--tRNA ligase from Mesoplasma florum (strain ATCC 33453 / NBRC 100688 / NCTC 11704 / L1) (Acholeplasma florum).